The following is a 316-amino-acid chain: SFAYSGNSESVWTGENITSIWKTILINETGSYCVAARPMTMDGAEFNLDLMGYSVSEDQINNDEIGIWNYISVAEMGGVLLFLSYWIWTCLHFSKIIFPAQKVICLYIFLFALNQTLQECIEEYVFSSECIKYRQFYSVYEIIDFLRTNFYRLFVIYCALGFGITRTVPKYLMIKGISIVIALCSVYWISLYKDVYVVSEIFDMIQYEVSPAIWVYSICHLLKQCTSVTTYENASKARFFRRMLNAFIFIFCASPMLHYLSNIIFGNFDYRLSVIIGDLFTFMEKIAFPCYIMFPTHNEALAYNRNVAEEAQEKMI.

Residues 1-70 (SFAYSGNSES…NNDEIGIWNY (70 aa)) lie on the Cytoplasmic side of the membrane. The chain crosses the membrane as a helical span at residues 71–91 (ISVAEMGGVLLFLSYWIWTCL). His92 is a topological domain (lumenal). A helical membrane pass occupies residues 93 to 113 (FSKIIFPAQKVICLYIFLFAL). Over 114–170 (NQTLQECIEEYVFSSECIKYRQFYSVYEIIDFLRTNFYRLFVIYCALGFGITRTVPK) the chain is Cytoplasmic. Residues 171–191 (YLMIKGISIVIALCSVYWISL) form a helical membrane-spanning segment. Residues 192 to 194 (YKD) are Lumenal-facing. A helical membrane pass occupies residues 195–215 (VYVVSEIFDMIQYEVSPAIWV). The Cytoplasmic segment spans residues 216–245 (YSICHLLKQCTSVTTYENASKARFFRRMLN). Residues 246–266 (AFIFIFCASPMLHYLSNIIFG) traverse the membrane as a helical segment. At 267–316 (NFDYRLSVIIGDLFTFMEKIAFPCYIMFPTHNEALAYNRNVAEEAQEKMI) the chain is on the lumenal side.

The protein belongs to the UPF0742 family.

It is found in the endoplasmic reticulum. It localises to the membrane. This is an uncharacterized protein from Schizosaccharomyces pombe (strain 972 / ATCC 24843) (Fission yeast).